A 235-amino-acid chain; its full sequence is Ubiquinone/menaquinone biosynthesis C-methyltransferase UbiE (235 aa).

Residues Thr60, Asp80, 106–107 (DV), and Ser123 contribute to the S-adenosyl-L-methionine site.

It belongs to the class I-like SAM-binding methyltransferase superfamily. MenG/UbiE family.

It carries out the reaction a 2-demethylmenaquinol + S-adenosyl-L-methionine = a menaquinol + S-adenosyl-L-homocysteine + H(+). It catalyses the reaction a 2-methoxy-6-(all-trans-polyprenyl)benzene-1,4-diol + S-adenosyl-L-methionine = a 5-methoxy-2-methyl-3-(all-trans-polyprenyl)benzene-1,4-diol + S-adenosyl-L-homocysteine + H(+). The protein operates within quinol/quinone metabolism; menaquinone biosynthesis; menaquinol from 1,4-dihydroxy-2-naphthoate: step 2/2. It functions in the pathway cofactor biosynthesis; ubiquinone biosynthesis. Its function is as follows. Methyltransferase required for the conversion of demethylmenaquinol (DMKH2) to menaquinol (MKH2) and the conversion of 2-polyprenyl-6-methoxy-1,4-benzoquinol (DDMQH2) to 2-polyprenyl-3-methyl-6-methoxy-1,4-benzoquinol (DMQH2). This is Ubiquinone/menaquinone biosynthesis C-methyltransferase UbiE from Bdellovibrio bacteriovorus (strain ATCC 15356 / DSM 50701 / NCIMB 9529 / HD100).